The following is a 476-amino-acid chain: Splicing factor ESS-2 homolog (476 aa).

Methionine 1 is subject to N-acetylmethionine. Low complexity predominate over residues 1–18; sequence METPGASASSLLLPAASR. Disordered regions lie at residues 1-36 and 91-148; these read METP…SKQR and LGKM…LPSL. Threonine 3 is modified (phosphothreonine). Over residues 133 to 142 the composition is skewed to acidic residues; the sequence is DGEAGEEEEK. Lysine 142 participates in a covalent cross-link: Glycyl lysine isopeptide (Lys-Gly) (interchain with G-Cter in SUMO2). At serine 292 the chain carries Phosphoserine. Phosphothreonine is present on threonine 386. Serine 391 and serine 395 each carry phosphoserine. The segment at 413–465 is disordered; sequence ALRASYTPSPARSTHLKTPASGLQTPTSTPAPGSATRTPLTQDPASITDNLLQ. Residues 437-451 show a composition bias toward low complexity; it reads TPTSTPAPGSATRTP. Polar residues predominate over residues 452-463; it reads LTQDPASITDNL.

Belongs to the ESS2 family. In terms of assembly, identified in the spliceosome C complex. Interacts with FRA10AC1. In terms of tissue distribution, highly expressed in heart, brain and skeletal muscle. Detected at low levels in placenta.

It is found in the nucleus. Functionally, may be involved in pre-mRNA splicing. The protein is Splicing factor ESS-2 homolog of Homo sapiens (Human).